The following is a 221-amino-acid chain: Mediator of RNA polymerase II transcription subunit 19a (221 aa).

Positions 101-221 (PVELPPAEKG…DEVGAIRVAG (121 aa)) are disordered. Positions 142-152 (EHKKHKHKHKD) are enriched in basic residues. Basic and acidic residues predominate over residues 153–178 (RSKDKDKDKDRDRKKDKNGHHDSGDH). Basic residues predominate over residues 179-188 (SKKHHDKKRK).

It belongs to the plant Mediator complex subunit 19 family. In terms of assembly, component of the Mediator complex. Interacts with FIB2.

The protein localises to the nucleus. Functionally, component of the Mediator complex, a coactivator involved in the regulated transcription of nearly all RNA polymerase II-dependent genes. Mediator functions as a bridge to convey information from gene-specific regulatory proteins to the basal RNA polymerase II transcription machinery. The Mediator complex, having a compact conformation in its free form, is recruited to promoters by direct interactions with regulatory proteins and serves for the assembly of a functional preinitiation complex with RNA polymerase II and the general transcription factors. The sequence is that of Mediator of RNA polymerase II transcription subunit 19a (MED19A) from Arabidopsis thaliana (Mouse-ear cress).